The primary structure comprises 63 residues: Large ribosomal subunit protein uL29 (63 aa).

It belongs to the universal ribosomal protein uL29 family.

The protein is Large ribosomal subunit protein uL29 of Colwellia psychrerythraea (strain 34H / ATCC BAA-681) (Vibrio psychroerythus).